The primary structure comprises 196 residues: Adenylyl-sulfate kinase (196 aa).

31-38 is an ATP binding site; that stretch reads GLSGAGKS. Ser-105 (phosphoserine intermediate) is an active-site residue.

This sequence belongs to the APS kinase family.

The enzyme catalyses adenosine 5'-phosphosulfate + ATP = 3'-phosphoadenylyl sulfate + ADP + H(+). It functions in the pathway sulfur metabolism; hydrogen sulfide biosynthesis; sulfite from sulfate: step 2/3. Catalyzes the synthesis of activated sulfate. The polypeptide is Adenylyl-sulfate kinase (cysC) (Pseudomonas aeruginosa (strain ATCC 15692 / DSM 22644 / CIP 104116 / JCM 14847 / LMG 12228 / 1C / PRS 101 / PAO1)).